A 285-amino-acid chain; its full sequence is Diphthine methyl ester synthase (285 aa).

S-adenosyl-L-methionine contacts are provided by residues Leu9, Asp84, Gly87, 112–113, Leu163, Val221, and His246; that span reads SI.

Belongs to the diphthine synthase family.

The protein resides in the cytoplasm. The catalysed reaction is 2-[(3S)-amino-3-carboxypropyl]-L-histidyl-[translation elongation factor 2] + 4 S-adenosyl-L-methionine = diphthine methyl ester-[translation elongation factor 2] + 4 S-adenosyl-L-homocysteine + 3 H(+). It functions in the pathway protein modification; peptidyl-diphthamide biosynthesis. S-adenosyl-L-methionine-dependent methyltransferase that catalyzes four methylations of the modified target histidine residue in translation elongation factor 2 (EF-2), to form an intermediate called diphthine methyl ester. The four successive methylation reactions represent the second step of diphthamide biosynthesis. This chain is Diphthine methyl ester synthase (dph5), found in Emericella nidulans (strain FGSC A4 / ATCC 38163 / CBS 112.46 / NRRL 194 / M139) (Aspergillus nidulans).